Reading from the N-terminus, the 422-residue chain is Synaptotagmin-15 (422 aa).

Topologically, residues 1 to 4 (MAEQ) are extracellular. Residues 5–27 (LALVIGCIIGGLLLLIGISCCLW) traverse the membrane as a helical; Signal-anchor for type III membrane protein segment. Over 28–422 (KRLCTTFTYE…WHALCRPMEP (395 aa)) the chain is Cytoplasmic. C2 domains follow at residues 148-267 (CLGR…VIWR) and 279-400 (EFGD…EHWN).

This sequence belongs to the synaptotagmin family. Homodimer.

It is found in the membrane. Functionally, may be involved in the trafficking and exocytosis of secretory vesicles in non-neuronal tissues. In Rattus norvegicus (Rat), this protein is Synaptotagmin-15 (Syt15).